The following is a 506-amino-acid chain: Glucosidase 2 subunit beta (506 aa).

Positions 1-23 are cleaved as a signal peptide; sequence MKFSQWYTLTAPLLISSLYTVNA. A disulfide bond links Cys-86 and Cys-108. Coiled coils occupy residues 172-243 and 338-374; these read SLVA…LYET and ESYRRFEAAQRDLDAAEENEKSLEKEHTKLMHELEYH. Residues 279-474 form the MRH domain; that stretch reads ESCNNHLSML…KMKSPAACSP (196 aa). 2 disulfide bridges follow: Cys-431-Cys-460 and Cys-445-Cys-472. The ER retrieval sequence motif lies at 503–506; sequence VDEL.

As to quaternary structure, heterodimer of a catalytic subunit alpha (gls2) and a subunit beta (gtb1).

It is found in the endoplasmic reticulum. Its function is as follows. Subunit of glucosidase 2, which cleaves sequentially the 2 innermost alpha-1,3-linked glucose residues from the Glc(2)Man(9)GlcNAc(2) oligosaccharide precursor of immature glycoproteins in the endoplasmic reticulum (ER). Specifically required for the cleavage of the final glucose. The subunit beta retains the catalytic subunit alpha in the ER. The chain is Glucosidase 2 subunit beta (gtb1) from Schizosaccharomyces pombe (strain 972 / ATCC 24843) (Fission yeast).